The primary structure comprises 243 residues: MQLAYFHVAADVPQGAEPDAAVVIDVLRATTTIAWALNNGAEAVETFADLDQLRQSAAQWPESSRLMLGERGGQRIEGFDLGNSPVAVVPEQVAGKRLFMSTTNGTRSLQRVRGVQRLFTLALPNRKAVADHLLMDPPEQLWIVGSGWEGAYSLEDSLAAGALADLLLDAAADEACVANDELTAALALWQQWKHDPEACLRQASHGQRLIGLGDHDADFRCCAELDRLSVVPVQVKPGVLCAS.

Belongs to the ComB family. Mg(2+) serves as cofactor.

It catalyses the reaction (2R)-O-phospho-3-sulfolactate + H2O = (2R)-3-sulfolactate + phosphate. This is Probable 2-phosphosulfolactate phosphatase from Prochlorococcus marinus (strain MIT 9313).